The following is a 473-amino-acid chain: Bifunctional protein GlmU (473 aa).

The segment at 1 to 226 (MRAPVAVVIL…AGEASGINDL (226 aa)) is pyrophosphorylase. UDP-N-acetyl-alpha-D-glucosamine-binding positions include 10 to 13 (LAAG), Lys24, Gln75, 80 to 81 (GT), 102 to 104 (YGD), Gly136, Glu151, Asn166, and Asn224. Residue Asp104 coordinates Mg(2+). Asn224 lines the Mg(2+) pocket. Residues 227–247 (VQLAEVEEAFQRRWARRLLQG) form a linker region. An N-acetyltransferase region spans residues 248 to 473 (GLRLVAPHRF…TPASGGAKEE (226 aa)). Positions 330 and 348 each coordinate UDP-N-acetyl-alpha-D-glucosamine. The active-site Proton acceptor is His360. Residues Tyr363 and Asn374 each contribute to the UDP-N-acetyl-alpha-D-glucosamine site. Acetyl-CoA-binding positions include Ala377, 383–384 (NY), Ser402, Ala420, and Arg437. The interval 439–473 (RARTIPGWQHPGLTGRRGPPDDNDATPASGGAKEE) is disordered.

It in the N-terminal section; belongs to the N-acetylglucosamine-1-phosphate uridyltransferase family. In the C-terminal section; belongs to the transferase hexapeptide repeat family. In terms of assembly, homotrimer. The cofactor is Mg(2+).

The protein localises to the cytoplasm. It catalyses the reaction alpha-D-glucosamine 1-phosphate + acetyl-CoA = N-acetyl-alpha-D-glucosamine 1-phosphate + CoA + H(+). The catalysed reaction is N-acetyl-alpha-D-glucosamine 1-phosphate + UTP + H(+) = UDP-N-acetyl-alpha-D-glucosamine + diphosphate. Its pathway is nucleotide-sugar biosynthesis; UDP-N-acetyl-alpha-D-glucosamine biosynthesis; N-acetyl-alpha-D-glucosamine 1-phosphate from alpha-D-glucosamine 6-phosphate (route II): step 2/2. It functions in the pathway nucleotide-sugar biosynthesis; UDP-N-acetyl-alpha-D-glucosamine biosynthesis; UDP-N-acetyl-alpha-D-glucosamine from N-acetyl-alpha-D-glucosamine 1-phosphate: step 1/1. The protein operates within bacterial outer membrane biogenesis; LPS lipid A biosynthesis. In terms of biological role, catalyzes the last two sequential reactions in the de novo biosynthetic pathway for UDP-N-acetylglucosamine (UDP-GlcNAc). The C-terminal domain catalyzes the transfer of acetyl group from acetyl coenzyme A to glucosamine-1-phosphate (GlcN-1-P) to produce N-acetylglucosamine-1-phosphate (GlcNAc-1-P), which is converted into UDP-GlcNAc by the transfer of uridine 5-monophosphate (from uridine 5-triphosphate), a reaction catalyzed by the N-terminal domain. The chain is Bifunctional protein GlmU from Halorhodospira halophila (strain DSM 244 / SL1) (Ectothiorhodospira halophila (strain DSM 244 / SL1)).